Here is a 201-residue protein sequence, read N- to C-terminus: Imidazole glycerol phosphate synthase subunit HisH (201 aa).

The region spanning 1–201 (MIAIIDYGAG…LLKRYEEMIR (201 aa)) is the Glutamine amidotransferase type-1 domain. Catalysis depends on cysteine 79, which acts as the Nucleophile. Active-site residues include histidine 181 and glutamate 183.

In terms of assembly, heterodimer of HisH and HisF.

The protein resides in the cytoplasm. It catalyses the reaction 5-[(5-phospho-1-deoxy-D-ribulos-1-ylimino)methylamino]-1-(5-phospho-beta-D-ribosyl)imidazole-4-carboxamide + L-glutamine = D-erythro-1-(imidazol-4-yl)glycerol 3-phosphate + 5-amino-1-(5-phospho-beta-D-ribosyl)imidazole-4-carboxamide + L-glutamate + H(+). The catalysed reaction is L-glutamine + H2O = L-glutamate + NH4(+). It participates in amino-acid biosynthesis; L-histidine biosynthesis; L-histidine from 5-phospho-alpha-D-ribose 1-diphosphate: step 5/9. Functionally, IGPS catalyzes the conversion of PRFAR and glutamine to IGP, AICAR and glutamate. The HisH subunit catalyzes the hydrolysis of glutamine to glutamate and ammonia as part of the synthesis of IGP and AICAR. The resulting ammonia molecule is channeled to the active site of HisF. The polypeptide is Imidazole glycerol phosphate synthase subunit HisH (Oceanobacillus iheyensis (strain DSM 14371 / CIP 107618 / JCM 11309 / KCTC 3954 / HTE831)).